Here is a 284-residue protein sequence, read N- to C-terminus: Homoserine O-acetyltransferase 2 (284 aa).

Cysteine 133 acts as the Acyl-thioester intermediate in catalysis. Residues lysine 154 and serine 178 each contribute to the substrate site. Histidine 220 functions as the Proton acceptor in the catalytic mechanism. Glutamate 222 is an active-site residue. Position 234 (arginine 234) interacts with substrate.

The protein belongs to the MetA family.

The protein localises to the cytoplasm. It carries out the reaction L-homoserine + acetyl-CoA = O-acetyl-L-homoserine + CoA. It functions in the pathway amino-acid biosynthesis; L-methionine biosynthesis via de novo pathway; O-acetyl-L-homoserine from L-homoserine: step 1/1. Its function is as follows. Transfers an acetyl group from acetyl-CoA to L-homoserine, forming acetyl-L-homoserine. This Ilyobacter polytropus (strain ATCC 51220 / DSM 2926 / LMG 16218 / CuHBu1) protein is Homoserine O-acetyltransferase 2.